The primary structure comprises 401 residues: CCA-adding enzyme (401 aa).

ATP-binding residues include G32 and R35. CTP-binding residues include G32 and R35. Mg(2+) contacts are provided by D45 and D47. 5 residues coordinate ATP: R116, D159, R162, R165, and R168. Residues R116, D159, R162, R165, and R168 each contribute to the CTP site.

It belongs to the tRNA nucleotidyltransferase/poly(A) polymerase family. Bacterial CCA-adding enzyme type 3 subfamily. As to quaternary structure, homodimer. The cofactor is Mg(2+).

The catalysed reaction is a tRNA precursor + 2 CTP + ATP = a tRNA with a 3' CCA end + 3 diphosphate. The enzyme catalyses a tRNA with a 3' CCA end + 2 CTP + ATP = a tRNA with a 3' CCACCA end + 3 diphosphate. Its function is as follows. Catalyzes the addition and repair of the essential 3'-terminal CCA sequence in tRNAs without using a nucleic acid template. Adds these three nucleotides in the order of C, C, and A to the tRNA nucleotide-73, using CTP and ATP as substrates and producing inorganic pyrophosphate. tRNA 3'-terminal CCA addition is required both for tRNA processing and repair. Also involved in tRNA surveillance by mediating tandem CCA addition to generate a CCACCA at the 3' terminus of unstable tRNAs. While stable tRNAs receive only 3'-terminal CCA, unstable tRNAs are marked with CCACCA and rapidly degraded. This chain is CCA-adding enzyme, found in Streptococcus mutans serotype c (strain ATCC 700610 / UA159).